The sequence spans 279 residues: NADPH-dependent 7-cyano-7-deazaguanine reductase (279 aa).

Substrate is bound at residue 86–88 (IES). Residue 88–89 (SK) coordinates NADPH. The active-site Thioimide intermediate is the cysteine 186. Aspartate 193 acts as the Proton donor in catalysis. 225 to 226 (HE) is a binding site for substrate. NADPH is bound at residue 254–255 (RG).

This sequence belongs to the GTP cyclohydrolase I family. QueF type 2 subfamily. As to quaternary structure, homodimer.

Its subcellular location is the cytoplasm. It catalyses the reaction 7-aminomethyl-7-carbaguanine + 2 NADP(+) = 7-cyano-7-deazaguanine + 2 NADPH + 3 H(+). It functions in the pathway tRNA modification; tRNA-queuosine biosynthesis. Catalyzes the NADPH-dependent reduction of 7-cyano-7-deazaguanine (preQ0) to 7-aminomethyl-7-deazaguanine (preQ1). The polypeptide is NADPH-dependent 7-cyano-7-deazaguanine reductase (Chromobacterium violaceum (strain ATCC 12472 / DSM 30191 / JCM 1249 / CCUG 213 / NBRC 12614 / NCIMB 9131 / NCTC 9757 / MK)).